The sequence spans 896 residues: Alanine--tRNA ligase (896 aa).

4 residues coordinate Zn(2+): H574, H578, C677, and H681.

This sequence belongs to the class-II aminoacyl-tRNA synthetase family. Zn(2+) is required as a cofactor.

It localises to the cytoplasm. It catalyses the reaction tRNA(Ala) + L-alanine + ATP = L-alanyl-tRNA(Ala) + AMP + diphosphate. Functionally, catalyzes the attachment of alanine to tRNA(Ala) in a two-step reaction: alanine is first activated by ATP to form Ala-AMP and then transferred to the acceptor end of tRNA(Ala). Also edits incorrectly charged Ser-tRNA(Ala) and Gly-tRNA(Ala) via its editing domain. The protein is Alanine--tRNA ligase of Mycoplasma capricolum subsp. capricolum (strain California kid / ATCC 27343 / NCTC 10154).